The following is a 224-amino-acid chain: C-&gt;U-editing enzyme APOBEC-2 (224 aa).

The tract at residues 1–24 (MAQKEEAAVATEAASQNGEDLENL) is disordered. Zn(2+)-binding residues include glutamate 60 and histidine 98. A CMP/dCMP-type deaminase domain is found at 64–169 (GRNKTFLCYV…PEIQAALKKL (106 aa)). The active-site Proton donor is the glutamate 100. Residues cysteine 128 and cysteine 131 each contribute to the Zn(2+) site.

This sequence belongs to the cytidine and deoxycytidylate deaminase family. In terms of assembly, homotetramer. Zn(2+) is required as a cofactor. Expressed exclusively in heart and skeletal muscle.

It catalyses the reaction cytidine(6666) in apoB mRNA + H2O + H(+) = uridine(6666) in apoB mRNA + NH4(+). In terms of biological role, probable C to U editing enzyme whose physiological substrate is not yet known. Does not display detectable apoB mRNA editing. Has a low intrinsic cytidine deaminase activity. May play a role in the epigenetic regulation of gene expression through the process of active DNA demethylation. This Homo sapiens (Human) protein is C-&gt;U-editing enzyme APOBEC-2 (APOBEC2).